The primary structure comprises 348 residues: Trans-L-3-hydroxyproline dehydratase (348 aa).

Residue C101 is the Proton acceptor of the active site. Substrate-binding positions include 102-103 (GH), D263, and 268-269 (GS).

It belongs to the proline racemase family. In terms of assembly, homodimer.

It catalyses the reaction trans-3-hydroxy-L-proline = 1-pyrroline-2-carboxylate + H2O. Its function is as follows. Catalyzes the dehydration of trans-3-hydroxy-L-proline to delta-1-pyrroline-2-carboxylate (Pyr2C). This is Trans-L-3-hydroxyproline dehydratase (l3hypdh) from Xenopus tropicalis (Western clawed frog).